The following is an 85-amino-acid chain: Colicin-E6 immunity protein (85 aa).

It belongs to the cloacin immunity protein family.

This protein inhibits the 16S RNA hydrolyzing activity of colicin E6 by binding with high affinity to the C-terminal catalytic domain of E6. This protein is able to protect a cell, which harbors the plasmid ColE6 against colicin E6. The chain is Colicin-E6 immunity protein (imm) from Escherichia coli.